The primary structure comprises 927 residues: Disks large homolog 1 (927 aa).

The L27 domain maps to 4-64 (RKQDTQRALT…FYEVTLLDNP (61 aa)). PDZ domains are found at residues 223-310 (EITL…RRRK), 318-405 (DIKL…AKPT), and 466-547 (KVVL…QYRP). The region spanning 581–651 (KRSLYVRALF…PSKRRVEKKE (71 aa)) is the SH3 domain. The disordered stretch occupies residues 692-719 (DQSEMETSDVDQHVTSNASDSESSYRGQ). Polar residues predominate over residues 704 to 717 (HVTSNASDSESSYR). The Guanylate kinase-like domain maps to 737–912 (SRPVIILGPT…IYNQIKQIIE (176 aa)).

It belongs to the MAGUK family.

The protein localises to the cell membrane. It localises to the endoplasmic reticulum membrane. It is found in the cell junction. The protein resides in the cytoplasm. Its subcellular location is the apical cell membrane. Essential multidomain scaffolding protein required for normal development. Recruits channels, receptors and signaling molecules to discrete plasma membrane domains in polarized cells. Promotes epithelial cell layer barrier function via maintaining cell-cell adhesion. May play a role in adherens junction assembly, signal transduction and cell proliferation. The polypeptide is Disks large homolog 1 (dlg1) (Xenopus tropicalis (Western clawed frog)).